We begin with the raw amino-acid sequence, 454 residues long: tRNA modification GTPase MnmE (454 aa).

The (6S)-5-formyl-5,6,7,8-tetrahydrofolate site is built by Arg-23, Glu-80, and Lys-120. Residues 216-377 (GMKVVIAGRP…LRDHLKQSMG (162 aa)) form the TrmE-type G domain. Residue Asn-226 participates in K(+) binding. GTP is bound by residues 226–231 (NAGKSS), 245–251 (TDIAGTT), 270–273 (DTAG), 335–338 (NKAD), and 358–360 (SAR). Mg(2+) is bound at residue Ser-230. K(+) is bound by residues Thr-245, Ile-247, and Thr-250. Thr-251 provides a ligand contact to Mg(2+). A (6S)-5-formyl-5,6,7,8-tetrahydrofolate-binding site is contributed by Lys-454.

Belongs to the TRAFAC class TrmE-Era-EngA-EngB-Septin-like GTPase superfamily. TrmE GTPase family. In terms of assembly, homodimer. Heterotetramer of two MnmE and two MnmG subunits. K(+) serves as cofactor.

The protein localises to the cytoplasm. In terms of biological role, exhibits a very high intrinsic GTPase hydrolysis rate. Involved in the addition of a carboxymethylaminomethyl (cmnm) group at the wobble position (U34) of certain tRNAs, forming tRNA-cmnm(5)s(2)U34. This chain is tRNA modification GTPase MnmE, found in Yersinia pestis.